The sequence spans 544 residues: Protein angel homolog 2 (544 aa).

It belongs to the CCR4/nocturin family.

The chain is Protein angel homolog 2 (ANGEL2) from Homo sapiens (Human).